The primary structure comprises 86 residues: CRISPR-associated endoribonuclease Cas2 (86 aa).

Residue aspartate 8 coordinates Mg(2+).

The protein belongs to the CRISPR-associated endoribonuclease Cas2 protein family. Homodimer, forms a heterotetramer with a Cas1 homodimer. It depends on Mg(2+) as a cofactor.

In terms of biological role, CRISPR (clustered regularly interspaced short palindromic repeat), is an adaptive immune system that provides protection against mobile genetic elements (viruses, transposable elements and conjugative plasmids). CRISPR clusters contain sequences complementary to antecedent mobile elements and target invading nucleic acids. CRISPR clusters are transcribed and processed into CRISPR RNA (crRNA). Functions as a ssRNA-specific endoribonuclease. Involved in the integration of spacer DNA into the CRISPR cassette. Plasmid targeted by CRISPR locus P1 transform wild-type cells very poorly. The protein is CRISPR-associated endoribonuclease Cas2 of Haloferax volcanii (strain ATCC 29605 / DSM 3757 / JCM 8879 / NBRC 14742 / NCIMB 2012 / VKM B-1768 / DS2) (Halobacterium volcanii).